Reading from the N-terminus, the 683-residue chain is Translation factor guf1, mitochondrial (683 aa).

Residues 1 to 43 (MRGCLQLARWLSAAPKGTAASLTRAPFVLANAPRYFTSSASRA) constitute a mitochondrion transit peptide. The region spanning 66 to 250 (ERYRNFCIVA…KIPAYGHFPV (185 aa)) is the tr-type G domain. GTP-binding positions include 75 to 82 (AHVDHGKS), 139 to 143 (DTPGH), and 193 to 196 (NKVD).

This sequence belongs to the TRAFAC class translation factor GTPase superfamily. Classic translation factor GTPase family. LepA subfamily.

The protein resides in the mitochondrion inner membrane. It carries out the reaction GTP + H2O = GDP + phosphate + H(+). Functionally, promotes mitochondrial protein synthesis. May act as a fidelity factor of the translation reaction, by catalyzing a one-codon backward translocation of tRNAs on improperly translocated ribosomes. Binds to mitochondrial ribosomes in a GTP-dependent manner. The protein is Translation factor guf1, mitochondrial (guf1) of Aspergillus fumigatus (strain ATCC MYA-4609 / CBS 101355 / FGSC A1100 / Af293) (Neosartorya fumigata).